Here is a 689-residue protein sequence, read N- to C-terminus: MTDEDYPTDDPAVVTCGLPYPTGDLHIGHLRTYVSGDAFSRALRKLGQETVFVSGTDMHGTPIAVQAIEAGVGPLDLGLERHEQYADTFEEFSVAFDTYGHTDEETNVELTREFVGAWEDNDHVYETEIQVAYDPDADQWLPDRYVEGTCPYCGEHARGDECDEGCQRHLEPGEIEAPVSTITGNSAEYHERAHKFLRLSDFQEYLEGFINRMEGTNNAKNQPREWIEGGLEDFCITRDLDWGIDYPGEGGDDLVLYVWVDAPIEYVAATKQYSERVGTEEFDWASVWKDGDGEIIHVIGRDIIQHHTVFWPSMLAGADYAEPRAVCATGFVNIDGRGLSTSKNRAIWAAEYLDAGFHPDLLRYYLATASGFERDVNFSWAEFAQRVNTELADAVGNFAYRALLFANRNFDGTPQEVSLTDDVETEIAQAMDDYEDALNEYDLRTAGERAVALARFGNEYIQHNEPWNLDSEAAAPVMRDCVQLVKAVAVLLQPFLPEKTETLWAQLGEDGRVSDATIADCLQAPPAEFGEPAELFEKIEDDRVTELDEALAAKIEAASSEDADGEGMADETADDGIELEPLAEDDISFEEFQALDLRVGEVVEAEGIEGADDLARLEVDIGHEVRQIVAGIKQLHDLDALPGTRVVVVANMEPSELFGVESNGMVLAAGEDADLLTTHEDSEPGTKVM.

Positions Pro-19 to His-29 match the 'HIGH' region motif. Residues Cys-150, Cys-153, Cys-162, and Cys-166 each contribute to the Zn(2+) site. The 'KMSKS' region motif lies at Gly-338–Ser-342. Thr-341 contributes to the ATP binding site. The region spanning Glu-591–Met-689 is the tRNA-binding domain.

This sequence belongs to the class-I aminoacyl-tRNA synthetase family. MetG type 1 subfamily. Homodimer. The cofactor is Zn(2+).

Its subcellular location is the cytoplasm. It catalyses the reaction tRNA(Met) + L-methionine + ATP = L-methionyl-tRNA(Met) + AMP + diphosphate. Its function is as follows. Is required not only for elongation of protein synthesis but also for the initiation of all mRNA translation through initiator tRNA(fMet) aminoacylation. This Halobacterium salinarum (strain ATCC 700922 / JCM 11081 / NRC-1) (Halobacterium halobium) protein is Methionine--tRNA ligase.